A 250-amino-acid polypeptide reads, in one-letter code: tRNA (guanine-N(1)-)-methyltransferase (250 aa).

S-adenosyl-L-methionine contacts are provided by residues Gly-113 and 133 to 138 (IGDYVL).

It belongs to the RNA methyltransferase TrmD family. In terms of assembly, homodimer.

It localises to the cytoplasm. The catalysed reaction is guanosine(37) in tRNA + S-adenosyl-L-methionine = N(1)-methylguanosine(37) in tRNA + S-adenosyl-L-homocysteine + H(+). In terms of biological role, specifically methylates guanosine-37 in various tRNAs. This is tRNA (guanine-N(1)-)-methyltransferase from Photorhabdus laumondii subsp. laumondii (strain DSM 15139 / CIP 105565 / TT01) (Photorhabdus luminescens subsp. laumondii).